A 392-amino-acid polypeptide reads, in one-letter code: F-box/kelch-repeat protein At4g39550 (392 aa).

A compositionally biased stretch (basic residues) spans 1 to 12 (MSSPEKKRKTTK). The tract at residues 1–27 (MSSPEKKRKTTKKPSPTPQSTTPNPSL) is disordered. The segment covering 18-27 (PQSTTPNPSL) has biased composition (low complexity). The F-box domain maps to 21-67 (TTPNPSLPDDLVVSCLARVSRLYYPTLSLVSKSFRSLIASPDLYKTR). Kelch repeat units follow at residues 148–194 (NIYN…VVEG), 195–242 (KIYV…KSAV), and 244–285 (EGEI…VVEN).

As to quaternary structure, part of a SCF (ASK-cullin-F-box) protein ligase complex. Interacts with ASK13 and ASK14.

The protein operates within protein modification; protein ubiquitination. Its function is as follows. Component of SCF(ASK-cullin-F-box) E3 ubiquitin ligase complexes, which may mediate the ubiquitination and subsequent proteasomal degradation of target proteins. This is F-box/kelch-repeat protein At4g39550 from Arabidopsis thaliana (Mouse-ear cress).